The chain runs to 275 residues: Integrase homolog (275 aa).

Positions 88-111 are enriched in basic and acidic residues; that stretch reads RVSQDRQAQGRERRSVLLPQERRG. Residues 88–120 form a disordered region; sequence RVSQDRQAQGRERRSVLLPQERRGSSGRQPLYS.

It belongs to the 'phage' integrase family.

In terms of biological role, integrase-recombinase proteins are responsible for catalyzing strand exchange between DNA molecules and play an important role in the DNA replication. Functionally, may be required for the formation of concatameric complex replicative intermediates and/or their resolution before encapsidation. This is Integrase homolog (INT) from Dryophytes versicolor (chameleon treefrog).